A 225-amino-acid polypeptide reads, in one-letter code: Red fluorescent protein drFP583 (225 aa).

Positions 66–68 form a cross-link, 2-iminomethyl-5-imidazolinone (Gln-Gly); it reads QYG. (Z)-2,3-didehydrotyrosine is present on Y67.

Belongs to the GFP family. Homotetramer. Post-translationally, contains a chromophore consisting of modified amino acid residues. The chromophore is formed by autocatalytic backbone condensation between Xaa-N and Gly-(N+2), oxidation of Tyr-(N+1) to didehydrotyrosine, and formation of a double bond to the alpha-amino nitrogen of residue Xaa-N. Maturation of the chromophore requires nothing other than molecular oxygen.

Its function is as follows. Thought to play a role in photoprotection of the coral's resident symbiont microalgae's photosystems from photoinhibition caused by high light levels found near the surface of coral reefs. In deeper water, the fluorescence may be to convert blue light into longer wavelengths more suitable for use in photosynthesis by the microalgal symbionts. The protein is Red fluorescent protein drFP583 of Discosoma sp. (Sea anemone).